Consider the following 659-residue polypeptide: Mitochondrial Rho GTPase 1 (659 aa).

Over M1–T631 the chain is Cytoplasmic. A Miro 1 domain is found at K3–N183. GTP-binding positions include G12–T19, D61–G63, and N115–D118. EF-hand domains are found at residues L199 to K234 and L328 to L363. Residues D212, D214, D216, E223, D341, D343, D345, and E352 each contribute to the Ca(2+) site. The 166-residue stretch at R444–E609 folds into the Miro 2 domain. GTP contacts are provided by residues G453–S460, E489–G493, and L558–D561. A helical; Anchor for type IV membrane protein transmembrane segment spans residues I632–I652. Residues Y653–T659 lie on the Mitochondrial intermembrane side of the membrane.

Belongs to the mitochondrial Rho GTPase family.

Its subcellular location is the mitochondrion outer membrane. Mitochondrial GTPase involved in mitochondrial trafficking. Probably involved in control of anterograde transport of mitochondria and their subcellular distribution. The protein is Mitochondrial Rho GTPase 1 (GEM1) of Kluyveromyces lactis (strain ATCC 8585 / CBS 2359 / DSM 70799 / NBRC 1267 / NRRL Y-1140 / WM37) (Yeast).